A 141-amino-acid polypeptide reads, in one-letter code: Hemoglobin subunit alpha-1/2 (141 aa).

The region spanning 1–141 (VLSPADKANV…VGTVLTSKYR (141 aa)) is the Globin domain. Ser3 carries the phosphoserine modification. N6-succinyllysine is present on residues Lys7 and Lys11. Lys16 bears the N6-acetyllysine; alternate mark. Residue Lys16 is modified to N6-succinyllysine; alternate. Tyr24 carries the phosphotyrosine modification. A Phosphoserine modification is found at Ser35. Lys40 is modified (N6-succinyllysine). At Ser49 the chain carries Phosphoserine. Residue His58 coordinates O2. A heme b-binding site is contributed by His87. Ser102 carries the phosphoserine modification. Residue Thr108 is modified to Phosphothreonine. Phosphoserine is present on residues Ser124 and Ser131. Thr134 and Thr137 each carry phosphothreonine. At Ser138 the chain carries Phosphoserine.

Belongs to the globin family. Heterotetramer of two alpha chains and two beta chains. Red blood cells.

In terms of biological role, involved in oxygen transport from the lung to the various peripheral tissues. This is Hemoglobin subunit alpha-1/2 from Macroderma gigas (Australian ghost bat).